The chain runs to 160 residues: Transcriptional repressor NrdR (160 aa).

Residues 1 to 11 are compositionally biased toward polar residues; it reads MRCPNCNSLDT. Positions 1–20 are disordered; it reads MRCPNCNSLDTQVKDSRPTE. Residues 3–34 fold into a zinc finger; it reads CPNCNSLDTQVKDSRPTEDSSVIRRRRVCIAC. The 91-residue stretch at 49 to 139 folds into the ATP-cone domain; the sequence is LTVIKRNGRR…VYRNFREAKD (91 aa).

This sequence belongs to the NrdR family. Requires Zn(2+) as cofactor.

In terms of biological role, negatively regulates transcription of bacterial ribonucleotide reductase nrd genes and operons by binding to NrdR-boxes. The polypeptide is Transcriptional repressor NrdR (Rhodopseudomonas palustris (strain HaA2)).